Reading from the N-terminus, the 499-residue chain is Glycerol kinase (499 aa).

Thr-12 serves as a coordination point for ADP. The ATP site is built by Thr-12, Thr-13, and Ser-14. Residue Thr-12 coordinates sn-glycerol 3-phosphate. Position 16 (Arg-16) interacts with ADP. Sn-glycerol 3-phosphate is bound by residues Arg-82, Glu-83, Tyr-134, and Asp-243. The glycerol site is built by Arg-82, Glu-83, Tyr-134, Asp-243, and Gln-244. Residues Thr-265 and Gly-308 each coordinate ADP. The ATP site is built by Thr-265, Gly-308, Gln-312, and Gly-411. Residue Gly-411 participates in ADP binding.

The protein belongs to the FGGY kinase family.

The enzyme catalyses glycerol + ATP = sn-glycerol 3-phosphate + ADP + H(+). The protein operates within polyol metabolism; glycerol degradation via glycerol kinase pathway; sn-glycerol 3-phosphate from glycerol: step 1/1. Its activity is regulated as follows. Inhibited by fructose 1,6-bisphosphate (FBP). Its function is as follows. Key enzyme in the regulation of glycerol uptake and metabolism. Catalyzes the phosphorylation of glycerol to yield sn-glycerol 3-phosphate. This Agrobacterium fabrum (strain C58 / ATCC 33970) (Agrobacterium tumefaciens (strain C58)) protein is Glycerol kinase.